The primary structure comprises 283 residues: Elongation factor Ts (283 aa).

Positions 79–82 are involved in Mg(2+) ion dislocation from EF-Tu; the sequence is TDFV.

It belongs to the EF-Ts family.

The protein resides in the cytoplasm. Associates with the EF-Tu.GDP complex and induces the exchange of GDP to GTP. It remains bound to the aminoacyl-tRNA.EF-Tu.GTP complex up to the GTP hydrolysis stage on the ribosome. The chain is Elongation factor Ts from Shewanella baltica (strain OS155 / ATCC BAA-1091).